Here is a 226-residue protein sequence, read N- to C-terminus: Chalcone--flavanone isomerase 3 (226 aa).

Substrate-binding residues include Thr-49, Asn-114, and Ser-191.

It belongs to the chalcone isomerase family.

It carries out the reaction a chalcone = a flavanone.. It functions in the pathway secondary metabolite biosynthesis; flavonoid biosynthesis. Catalyzes the intramolecular cyclization of bicyclic chalcones into tricyclic (S)-flavanones. Responsible for the isomerization of 4,2',4',6'-tetrahydroxychalcone (also termed chalcone) into naringenin. The chain is Chalcone--flavanone isomerase 3 (CHI3) from Glycine max (Soybean).